Here is a 274-residue protein sequence, read N- to C-terminus: Cytochrome b-c1 complex subunit Rieske, mitochondrial (274 aa).

The disordered stretch occupies residues Xaa-29–Ile-49. At Ser-79–Ser-103 the chain is on the mitochondrial matrix side. A helical transmembrane segment spans residues Arg-104–Met-140. Topologically, residues Ser-141–Gly-274 are mitochondrial intermembrane. Residues Glu-187–Val-272 form the Rieske domain. [2Fe-2S] cluster contacts are provided by Cys-217, His-219, Cys-236, His-239, and Ser-241. The cysteines at positions 222 and 238 are disulfide-linked.

This sequence belongs to the Rieske iron-sulfur protein family. Component of the ubiquinol-cytochrome c oxidoreductase (cytochrome b-c1 complex, complex III, CIII), a multisubunit enzyme composed of 11 subunits. The complex is composed of 3 respiratory subunits cytochrome b, cytochrome c1 and Rieske protein UQCRFS1, 2 core protein subunits UQCRC1/QCR1 and UQCRC2/QCR2, and 6 low-molecular weight protein subunits UQCRH/QCR6, UQCRB/QCR7, UQCRQ/QCR8, UQCR10/QCR9, UQCR11/QCR10 and subunit 9, the cleavage product of Rieske protein UQCRFS1. The complex exists as an obligatory dimer and forms supercomplexes (SCs) in the inner mitochondrial membrane with NADH-ubiquinone oxidoreductase (complex I, CI) and cytochrome c oxidase (complex IV, CIV), resulting in different assemblies (supercomplex SCI(1)III(2)IV(1) and megacomplex MCI(2)III(2)IV(2)). Incorporation of the Rieske protein UQCRFS1 is the penultimate step in complex III assembly. Interacts with TTC19, which is involved in the clearance of UQCRFS1 fragments. In terms of assembly, component of the ubiquinol-cytochrome c oxidoreductase (cytochrome b-c1 complex, complex III, CIII). Subunit 9 corresponds to the mitochondrial targeting sequence (MTS) of Rieske protein UQCRFS1. It is retained after processing and incorporated inside complex III, where it remains bound to the complex and localizes between the 2 core subunits UQCRC1/QCR1 and UQCRC2/QCR2. The cofactor is [2Fe-2S] cluster. In terms of processing, proteolytic processing is necessary for the correct insertion of UQCRFS1 in the complex III dimer. Several fragments are generated during UQCRFS1 insertion, most probably due to the endogenous matrix-processing peptidase (MPP) activity of the 2 core protein subunits UQCRC1/QCR1 and UQCRC2/QCR2, which are homologous to the 2 mitochondrial-processing peptidase (MPP) subunits beta-MPP and alpha-MPP respectively. The action of the protease is also necessary for the clearance of the UQCRFS1 fragments.

The protein resides in the mitochondrion inner membrane. It catalyses the reaction a quinol + 2 Fe(III)-[cytochrome c](out) = a quinone + 2 Fe(II)-[cytochrome c](out) + 2 H(+)(out). Component of the ubiquinol-cytochrome c oxidoreductase, a multisubunit transmembrane complex that is part of the mitochondrial electron transport chain which drives oxidative phosphorylation. The respiratory chain contains 3 multisubunit complexes succinate dehydrogenase (complex II, CII), ubiquinol-cytochrome c oxidoreductase (cytochrome b-c1 complex, complex III, CIII) and cytochrome c oxidase (complex IV, CIV), that cooperate to transfer electrons derived from NADH and succinate to molecular oxygen, creating an electrochemical gradient over the inner membrane that drives transmembrane transport and the ATP synthase. The cytochrome b-c1 complex catalyzes electron transfer from ubiquinol to cytochrome c, linking this redox reaction to translocation of protons across the mitochondrial inner membrane, with protons being carried across the membrane as hydrogens on the quinol. In the process called Q cycle, 2 protons are consumed from the matrix, 4 protons are released into the intermembrane space and 2 electrons are passed to cytochrome c. The Rieske protein is a catalytic core subunit containing a [2Fe-2S] iron-sulfur cluster. It cycles between 2 conformational states during catalysis to transfer electrons from the quinol bound in the Q(0) site in cytochrome b to cytochrome c1. Incorporation of UQCRFS1 is the penultimate step in complex III assembly. Its function is as follows. Component of the ubiquinol-cytochrome c oxidoreductase (cytochrome b-c1 complex, complex III, CIII). UQCRFS1 undergoes proteolytic processing once it is incorporated in the complex III dimer. One of the fragments, called subunit 9, corresponds to its mitochondrial targeting sequence (MTS). The proteolytic processing is necessary for the correct insertion of UQCRFS1 in the complex III dimer, but the persistence of UQCRFS1-derived fragments may prevent newly imported UQCRFS1 to be processed and assembled into complex III and is detrimental for the complex III structure and function. In Saimiri sciureus (Common squirrel monkey), this protein is Cytochrome b-c1 complex subunit Rieske, mitochondrial (UQCRFS1).